A 310-amino-acid chain; its full sequence is Malate dehydrogenase (310 aa).

Residues Gly-7–Gly-12 and Asp-32 each bind NAD(+). 2 residues coordinate substrate: Arg-81 and Arg-87. NAD(+)-binding positions include Asn-94 and Val-117–Asn-119. Asn-119 and Arg-150 together coordinate substrate. The Proton acceptor role is filled by His-174.

This sequence belongs to the LDH/MDH superfamily. MDH type 3 family.

It carries out the reaction (S)-malate + NAD(+) = oxaloacetate + NADH + H(+). Its function is as follows. Catalyzes the reversible oxidation of malate to oxaloacetate. The sequence is that of Malate dehydrogenase from Chlorobium luteolum (strain DSM 273 / BCRC 81028 / 2530) (Pelodictyon luteolum).